The following is a 156-amino-acid chain: Small ribosomal subunit protein uS17A (156 aa).

Residue S2 is modified to N-acetylserine. Glycyl lysine isopeptide (Lys-Gly) (interchain with G-Cter in ubiquitin) cross-links involve residues K15, K46, K56, K57, K79, K96, K105, K133, K141, and K148.

This sequence belongs to the universal ribosomal protein uS17 family. As to quaternary structure, component of the small ribosomal subunit (SSU). Mature yeast ribosomes consist of a small (40S) and a large (60S) subunit. The 40S small subunit contains 1 molecule of ribosomal RNA (18S rRNA) and 33 different proteins (encoded by 57 genes). The large 60S subunit contains 3 rRNA molecules (25S, 5.8S and 5S rRNA) and 46 different proteins (encoded by 81 genes). Post-translationally, N-terminally acetylated by acetyltransferase NatA.

The protein resides in the cytoplasm. Component of the ribosome, a large ribonucleoprotein complex responsible for the synthesis of proteins in the cell. The small ribosomal subunit (SSU) binds messenger RNAs (mRNAs) and translates the encoded message by selecting cognate aminoacyl-transfer RNA (tRNA) molecules. The large subunit (LSU) contains the ribosomal catalytic site termed the peptidyl transferase center (PTC), which catalyzes the formation of peptide bonds, thereby polymerizing the amino acids delivered by tRNAs into a polypeptide chain. The nascent polypeptides leave the ribosome through a tunnel in the LSU and interact with protein factors that function in enzymatic processing, targeting, and the membrane insertion of nascent chains at the exit of the ribosomal tunnel. The chain is Small ribosomal subunit protein uS17A from Saccharomyces cerevisiae (strain ATCC 204508 / S288c) (Baker's yeast).